The primary structure comprises 380 residues: MRTIKEKKEHPRLRKTARTKKVTHRKLSSGPVCLLCFQEPGDPEKLGEFLQKDNLCVHYFCLILSSKLPQKGQPNRGLHGFMPEDIKKEAARASRKVCFVCKRKGAAIRCQKDQCVQNFHLPCGQERGCLSQFFGEYKSYCGKHRPTQNIHQRSFGESCVLCCEDLSRASVENIRSPCCSQAIYHRKCIQKYAHTSAKHFFKCPQCNNREEFPQEMLRMGIHIPDRDAAWELEPGAFSELYQRYQHCDAPICLYEQGRDSFEDEGRWRLILCATCGSHGTHRDCSSLRPNSKKWECNECLPASTEDSVSENLGDTPCCSSTFCPHEPFLRATSLEENPGSSWTNWLQPSLLEKPESSSGSSCQSWRSKGIKVTKDCKKSK.

Residues 1–23 (MRTIKEKKEHPRLRKTARTKKVT) are disordered. Basic residues predominate over residues 10–23 (HPRLRKTARTKKVT). Residues 30–68 (GPVCLLCFQEPGDPEKLGEFLQKDNLCVHYFCLILSSKL) form a C2HC pre-PHD-type zinc finger. Zn(2+) is bound by residues C33, C36, H58, and C61. The interval 67-92 (KLPQKGQPNRGLHGFMPEDIKKEAAR) is required for interaction and ubiquitination of the nucleosome core particle. The PHD-type zinc-finger motif lies at 96-145 (KVCFVCKRKGAAIRCQKDQCVQNFHLPCGQERGCLSQFFGEYKSYCGKHR). Zn(2+) is bound by residues C98, C101, C110, C115, H120, C123, C141, H144, C159, C162, C178, C179, H185, C188, C203, C206, C247, C252, C272, C275, H281, C284, C296, and C299. Positions 150–306 (IHQRSFGESC…NECLPASTED (157 aa)) are required for interaction with ubiquitinated UBE2D2. The RING-type; degenerate zinc-finger motif lies at 159–207 (CVLCCEDLSRASVENIRSPCCSQAIYHRKCIQKYAHTSAKHFFKCPQCN). The segment at 243–300 (RYQHCDAPICLYEQGRDSFEDEGRWRLILCATCGSHGTHRDCSSLRPNSKKWECNECL) is required for association with and ubiquitination of H3. Low complexity predominate over residues 352–367 (EKPESSSGSSCQSWRS). Positions 352-380 (EKPESSSGSSCQSWRSKGIKVTKDCKKSK) are disordered.

As to quaternary structure, interacts with MEF2C; the interaction promotes MEF2C binding to its transcription targets. Interacts with GATA4; the interaction promotes GATA4 binding to its transcription targets. Interacts with UBE2D2; the interaction inhibits cleavage of PHF7 and promotes association of the complex with the nucleosome core particle.

The protein localises to the nucleus. The enzyme catalyses S-ubiquitinyl-[E2 ubiquitin-conjugating enzyme]-L-cysteine + [acceptor protein]-L-lysine = [E2 ubiquitin-conjugating enzyme]-L-cysteine + N(6)-ubiquitinyl-[acceptor protein]-L-lysine.. It functions in the pathway protein modification; protein ubiquitination. Its function is as follows. E3 ubiquitin-protein ligase which ubiquitinates histone H3 at 'Lys-14'. Required for male fertility, via inhibition of SPOP-mediated BRDT degradation when in the presence of acetylated histone H4 in early condensing spermatids. Stabilization of BRDT allows it to facilitate histone removal in early condensing spermatids and promote the progression of histone-to-protamine exchange. Promotes the expression of steroidogenesis proteins in the testes, and as a result plays a role in maintaining testosterone levels and repressing osteoclastogenesis. Promotes transcription of cardiac enhancer genes by facilitating binding of cardiac transcription factors such as MEF2C and GATA4 to target gene promoters. Ubiquitinates histone H4. Ubiquitinates histone H2A and H3 as part of the nucleosome core particle. This Rattus norvegicus (Rat) protein is E3 ubiquitin-protein ligase PHF7.